The chain runs to 147 residues: Protein MioC (147 aa).

The Flavodoxin-like domain maps to Ile-4 to Val-143.

Belongs to the flavodoxin family. MioC subfamily. Homodimer. Requires FMN as cofactor.

Functionally, probable electron transporter required for biotin synthase activity. The protein is Protein MioC (mioC) of Escherichia coli (strain K12).